The following is a 419-amino-acid chain: MKLYEWLLQRVRKALKKAYEASKEIKTMKQDFSLYKKSDFFDTTSWENSFSYIDFELNKYKWIIKYSLFKYRVSVVFLLFLSPFEISHSKDSLYFNILHNKKIHMQLSWIKKVIDDIETWQKKKRDFFYLQQTKNKQKQKKFHLGILSNIDSIAYETIGFIPRSITRTLYRFKTELTGKTALILFREFRFAKYQALASIQYGFFLLLLPWIVTLLFKKLSLEYLMNVWWNKSSIQLFNASQKKIALKRFQNMEDIFWLDLITKETLENKSQYSISLKIHDMIISLVEIYTQKSIYTIIELITDFIGIFTITVILCIAKKRLTVLNSWLQELFYSLSDTMKAFFILLITDLCIGFHSPHGWEVLIELVWEHFGFVPNQYITSFFVSTFPVVLDTMVKYWIFRHLNRISPSIVVTYHSMNE.

The next 4 membrane-spanning stretches (helical) occupy residues 196–216 (LASI…TLLF), 297–317 (IIEL…LCIA), 344–364 (ILLI…EVLI), and 371–391 (FGFV…PVVL).

This sequence belongs to the CemA family.

It is found in the plastid. The protein resides in the chloroplast inner membrane. It carries out the reaction K(+)(in) + H(+)(out) = K(+)(out) + H(+)(in). Contributes to K(+)/H(+) antiport activity by supporting proton efflux to control proton extrusion and homeostasis in chloroplasts in a light-dependent manner to modulate photosynthesis. Prevents excessive induction of non-photochemical quenching (NPQ) under continuous-light conditions. Indirectly promotes efficient inorganic carbon uptake into chloroplasts. This is Potassium/proton antiporter CemA from Chara vulgaris (Common stonewort).